The primary structure comprises 358 residues: Probable tartrate dehydrogenase/decarboxylase TtuC' (358 aa).

Residues aspartate 222, aspartate 246, and aspartate 250 each coordinate Mn(2+).

This sequence belongs to the isocitrate and isopropylmalate dehydrogenases family. It depends on Mg(2+) as a cofactor. Mn(2+) is required as a cofactor. Requires K(+) as cofactor.

The protein localises to the cytoplasm. It catalyses the reaction tartrate + NAD(+) = 2-hydroxy-3-oxosuccinate + NADH + H(+). The enzyme catalyses (2R,3S)-tartrate + NAD(+) = 2-hydroxy-3-oxosuccinate + NADH + H(+). The catalysed reaction is (2R,3R)-tartrate + NAD(+) = 2-hydroxy-3-oxosuccinate + NADH + H(+). It carries out the reaction (2R,3R)-tartrate + H(+) = (R)-glycerate + CO2. It catalyses the reaction (R)-malate + NAD(+) = pyruvate + CO2 + NADH. Its pathway is carbohydrate acid metabolism; tartrate degradation; 2-hydroxy-3-oxosuccinate from L-tartrate: step 1/1. The protein operates within carbohydrate acid metabolism; tartrate degradation; 2-hydroxy-3-oxosuccinate from meso-tartrate: step 1/1. It participates in carbohydrate acid metabolism; tartrate degradation; D-glycerate from L-tartrate: step 1/1. Has multiple catalytic activities. Apart from catalyzing the oxidation of (+)-tartrate to oxaloglycolate, also converts meso-tartrate to D-glycerate and catalyzes the oxidative decarboxylation of D-malate to pyruvate. The chain is Probable tartrate dehydrogenase/decarboxylase TtuC' (ttuC') from Agrobacterium vitis (Rhizobium vitis).